A 268-amino-acid polypeptide reads, in one-letter code: Hemin import ATP-binding protein HmuV (268 aa).

Positions 5-242 (IEARHLSKRA…ETIRDIFEID (238 aa)) constitute an ABC transporter domain. 37–44 (GPNGAGKS) serves as a coordination point for ATP.

The protein belongs to the ABC transporter superfamily. Heme (hemin) importer (TC 3.A.1.14.5) family. The complex is composed of two ATP-binding proteins (HmuV), two transmembrane proteins (HmuU) and a solute-binding protein (HmuT).

The protein localises to the cell inner membrane. In terms of biological role, part of the ABC transporter complex HmuTUV involved in hemin import. Responsible for energy coupling to the transport system. The sequence is that of Hemin import ATP-binding protein HmuV from Bradyrhizobium diazoefficiens (strain JCM 10833 / BCRC 13528 / IAM 13628 / NBRC 14792 / USDA 110).